Here is a 448-residue protein sequence, read N- to C-terminus: N-succinylarginine dihydrolase (448 aa).

Residues 19–28 (AGLSSGNIAS), Asn110, and 137–138 (HR) contribute to the substrate site. Glu174 is a catalytic residue. Arg216 contacts substrate. His252 is a catalytic residue. Substrate contacts are provided by Asp254 and Asn366. Residue Cys372 is the Nucleophile of the active site.

Belongs to the succinylarginine dihydrolase family. Homodimer.

It catalyses the reaction N(2)-succinyl-L-arginine + 2 H2O + 2 H(+) = N(2)-succinyl-L-ornithine + 2 NH4(+) + CO2. Its pathway is amino-acid degradation; L-arginine degradation via AST pathway; L-glutamate and succinate from L-arginine: step 2/5. Its function is as follows. Catalyzes the hydrolysis of N(2)-succinylarginine into N(2)-succinylornithine, ammonia and CO(2). The sequence is that of N-succinylarginine dihydrolase from Legionella pneumophila (strain Paris).